The chain runs to 486 residues: Glutamyl-tRNA(Gln) amidotransferase subunit A (486 aa).

Residues Lys-75 and Ser-150 each act as charge relay system in the active site. Ser-174 serves as the catalytic Acyl-ester intermediate.

This sequence belongs to the amidase family. GatA subfamily. Heterotrimer of A, B and C subunits.

It carries out the reaction L-glutamyl-tRNA(Gln) + L-glutamine + ATP + H2O = L-glutaminyl-tRNA(Gln) + L-glutamate + ADP + phosphate + H(+). In terms of biological role, allows the formation of correctly charged Gln-tRNA(Gln) through the transamidation of misacylated Glu-tRNA(Gln) in organisms which lack glutaminyl-tRNA synthetase. The reaction takes place in the presence of glutamine and ATP through an activated gamma-phospho-Glu-tRNA(Gln). In Nostoc sp. (strain PCC 7120 / SAG 25.82 / UTEX 2576), this protein is Glutamyl-tRNA(Gln) amidotransferase subunit A.